The primary structure comprises 989 residues: Phosphoenolpyruvate carboxylase (989 aa).

Catalysis depends on residues histidine 175 and lysine 630.

This sequence belongs to the PEPCase type 1 family. Mg(2+) serves as cofactor.

It catalyses the reaction oxaloacetate + phosphate = phosphoenolpyruvate + hydrogencarbonate. Functionally, forms oxaloacetate, a four-carbon dicarboxylic acid source for the tricarboxylic acid cycle. This chain is Phosphoenolpyruvate carboxylase, found in Prochlorococcus marinus (strain AS9601).